The chain runs to 714 residues: 2'-5'-oligoadenylate synthase 2 (714 aa).

The N-myristoyl glycine moiety is linked to residue Gly2. 2 OAS domain regions span residues 11–336 (KPSE…SWNV) and 344–683 (TPGH…WNVP). Ser397 serves as a coordination point for ATP. Mg(2+) is bound by residues Asp409 and Asp480. The ATP site is built by Arg544 and Lys547.

This sequence belongs to the 2-5A synthase family. As to quaternary structure, homodimer. The cofactor is Mg(2+). In terms of processing, myristoylation is not essential for its activity. Post-translationally, glycosylated. Glycosylation is essential for its activity.

Its subcellular location is the cytoplasm. It is found in the perinuclear region. It catalyses the reaction 3 ATP = 5'-triphosphoadenylyl-(2'-&gt;5')-adenylyl-(2'-&gt;5')-adenosine + 2 diphosphate. Its activity is regulated as follows. Produced as a latent enzyme which is activated by double stranded RNA (dsRNA) generated during the course of viral infection. The dsRNA activator must be at least 15 nucleotides long, and no modification of the 2'-hydroxyl group is tolerated. ssRNA or dsDNA do not act as activators. Strongly inhibited by copper, iron and zinc ions. Partially inhibited by cobalt and nickel ions. Functionally, interferon-induced, dsRNA-activated antiviral enzyme which plays a critical role in cellular innate antiviral response. Activated by detection of double stranded RNA (dsRNA): polymerizes higher oligomers of 2'-5'-oligoadenylates (2-5A) from ATP which then bind to the inactive monomeric form of ribonuclease L (RNASEL) leading to its dimerization and subsequent activation. Activation of RNASEL leads to degradation of cellular as well as viral RNA, resulting in the inhibition of protein synthesis, thus terminating viral replication. Can mediate the antiviral effect via the classical RNASEL-dependent pathway or an alternative antiviral pathway independent of RNASEL. In addition, it may also play a role in other cellular processes such as apoptosis, cell growth, differentiation and gene regulation. May act as a negative regulator of lactation, stopping lactation in virally infected mammary gland lobules, thereby preventing transmission of viruses to neonates. Non-infected lobules would not be affected, allowing efficient pup feeding during infection. The sequence is that of 2'-5'-oligoadenylate synthase 2 (OAS2) from Bos taurus (Bovine).